The sequence spans 210 residues: Prolactin-2 (210 aa).

A signal peptide spans Met1–Ala23. 2 disulfides stabilise this stretch: Cys69–Cys183 and Cys200–Cys210.

This sequence belongs to the somatotropin/prolactin family.

It localises to the secreted. In Oncorhynchus tshawytscha (Chinook salmon), this protein is Prolactin-2 (prl2).